A 1446-amino-acid polypeptide reads, in one-letter code: ABC transporter G family member 53 (1446 aa).

An ABC transporter 1 domain is found at 153–426 (ANTLHITPNR…FESVGFKCPE (274 aa)). 186 to 193 (GPPGAGKT) is a binding site for ATP. Residues 504–717 (ELLKANIDRE…AQNAISVNEF (214 aa)) form the ABC transmembrane type-2 1 domain. The next 6 helical transmembrane spans lie at 523-543 (VYIFKATQLTLMTFIAMTVFI), 555-575 (GGIYMGALFFGILMIMFNGLA), 610-630 (TPLSLLNVTIWVFITYYVIGF), 641-661 (FLLLLVMNETSSGLFRFIAGF), 666-686 (VVASTMGSFCILIFMLLGGFI), and 752-772 (IGVGALLGYVLLFNILYTICL). An ABC transporter 2 domain is found at 849 to 1101 (ITFEDIRYSV…ELIRYFESIE (253 aa)). Position 894-901 (894-901 (GVSGAGKT)) interacts with ATP. The 215-residue stretch at 1174–1388 (TQCLACLWKQ…TLYGLVTSQF (215 aa)) folds into the ABC transmembrane type-2 2 domain. Transmembrane regions (helical) follow at residues 1195 to 1215 (AVKYFYTIVIALLFGTMFWGV), 1225 to 1242 (LFNAMGSMYASVLFMGVQ), 1281 to 1301 (LPYILVQSLIYGVLVYAMIGF), 1308 to 1328 (FFWYLFFMYFTLSYYTFYGMM), 1338 to 1358 (VASVVSTAFYAIWNLFSGFII), 1363 to 1383 (IPIWWRWYYWVCPVAWTLYGL), and 1415 to 1435 (FLWVVAVMVVSFAVLFAFLFG).

This sequence belongs to the ABC transporter superfamily. ABCG family. PDR (TC 3.A.1.205) subfamily.

The protein localises to the membrane. Its function is as follows. May be a general defense protein. In Oryza sativa subsp. japonica (Rice), this protein is ABC transporter G family member 53.